Consider the following 571-residue polypeptide: MAVTITKRPPRLTLQVLDIAPETTAIRCLDWDRDRFDIEFALENGTTYNSFLIKGERIALVDTSHAKFGDRYLEQLWQLVNPSDLDYLIVSHTEPDHSGLVKDVLVKAPHVTVVASKVALQFLGDLIHQPFTQQQVKNGDRLDLGKGHVLEFVMAPNLHWPDTILTFDHGTQTLFTCDVFGAHFCNDDPFDSEPELLAPDFKFYYDCLMGPNARSVLSAFKRLESLPPVQLVATGHGPLLRHHLDQWLESYRNWSQEQAKAATTVAIFYAANYGYSNALAEAIERGTAKTGVVVEKMDLLTAEPQDIRELTEIAAGIIIGTPPTTAVAKTALSTIRAAAHAKQAIGVFESGVADAEPAYPLLNQFRDAGLVPSFPVIRVTAAPTDALFQEAEEAGTDMGQWLLRDRTVKQMKALDTDLDKALGRLSGGLYIITAQKGAINSAMLASWVAQASTEPLGVSIAVAKDRAIESFLHVGDTFVLNVLEAENYQPLMRHFLKRFPPGADRFAHVKTYPASNGSPILADALAYMECTVVSRLDAHDHWIVYSTVDSGRVSKPDGMTAVHHRKVGNHY.

The segment at 43–236 is zinc metallo-hydrolase; it reads ENGTTYNSFL…PPVQLVATGH (194 aa). Positions 92, 94, 96, 159, 178, and 236 each coordinate Fe cation. The region spanning 265 to 426 is the Flavodoxin-like domain; sequence VAIFYAANYG…DLDKALGRLS (162 aa). The segment at 427–571 is flavodoxin-reductase-like; the sequence is GGLYIITAQK…VHHRKVGNHY (145 aa).

This sequence in the N-terminal section; belongs to the zinc metallo-hydrolase group 3 family. The protein in the C-terminal section; belongs to the flavodoxin reductase family. It depends on Fe cation as a cofactor.

Its function is as follows. Mediates electron transfer from NADH to oxygen, reducing it to water. This modular protein has 3 redox cofactors, in other organisms the same activity requires 2 or 3 proteins. The protein is Putative diflavin flavoprotein A 1 (dfa1) of Thermosynechococcus vestitus (strain NIES-2133 / IAM M-273 / BP-1).